The chain runs to 95 residues: Aspartyl/glutamyl-tRNA(Asn/Gln) amidotransferase subunit C (95 aa).

Belongs to the GatC family. In terms of assembly, heterotrimer of A, B and C subunits.

The catalysed reaction is L-glutamyl-tRNA(Gln) + L-glutamine + ATP + H2O = L-glutaminyl-tRNA(Gln) + L-glutamate + ADP + phosphate + H(+). It carries out the reaction L-aspartyl-tRNA(Asn) + L-glutamine + ATP + H2O = L-asparaginyl-tRNA(Asn) + L-glutamate + ADP + phosphate + 2 H(+). Functionally, allows the formation of correctly charged Asn-tRNA(Asn) or Gln-tRNA(Gln) through the transamidation of misacylated Asp-tRNA(Asn) or Glu-tRNA(Gln) in organisms which lack either or both of asparaginyl-tRNA or glutaminyl-tRNA synthetases. The reaction takes place in the presence of glutamine and ATP through an activated phospho-Asp-tRNA(Asn) or phospho-Glu-tRNA(Gln). The sequence is that of Aspartyl/glutamyl-tRNA(Asn/Gln) amidotransferase subunit C from Pseudomonas paraeruginosa (strain DSM 24068 / PA7) (Pseudomonas aeruginosa (strain PA7)).